A 465-amino-acid polypeptide reads, in one-letter code: Exoenzymes regulatory protein AepA (465 aa).

The N-terminal stretch at 1-21 (MKFNVKMLSVTLGLFTSHAFA) is a signal peptide.

The protein belongs to the metallo-dependent hydrolases superfamily.

Its function is as follows. Involved in the control of extracellular enzymes production. Stimulates PEL, PEH, CEL, and PRT production. The polypeptide is Exoenzymes regulatory protein AepA (aepA) (Pectobacterium carotovorum subsp. carotovorum (Erwinia carotovora subsp. carotovora)).